We begin with the raw amino-acid sequence, 345 residues long: Phosphoribosylformylglycinamidine cyclo-ligase (345 aa).

Belongs to the AIR synthase family.

Its subcellular location is the cytoplasm. The enzyme catalyses 2-formamido-N(1)-(5-O-phospho-beta-D-ribosyl)acetamidine + ATP = 5-amino-1-(5-phospho-beta-D-ribosyl)imidazole + ADP + phosphate + H(+). It functions in the pathway purine metabolism; IMP biosynthesis via de novo pathway; 5-amino-1-(5-phospho-D-ribosyl)imidazole from N(2)-formyl-N(1)-(5-phospho-D-ribosyl)glycinamide: step 2/2. The protein is Phosphoribosylformylglycinamidine cyclo-ligase of Ligilactobacillus salivarius (strain UCC118) (Lactobacillus salivarius).